The chain runs to 1094 residues: Isoleucine--tRNA ligase (1094 aa).

Positions 53–63 (PFANGLPHYGH) match the 'HIGH' region motif. Residues 624–628 (KLSKR) carry the 'KMSKS' region motif. Lys627 is a binding site for ATP.

Belongs to the class-I aminoacyl-tRNA synthetase family. IleS type 2 subfamily. As to quaternary structure, monomer. Zn(2+) is required as a cofactor.

The protein localises to the cytoplasm. It catalyses the reaction tRNA(Ile) + L-isoleucine + ATP = L-isoleucyl-tRNA(Ile) + AMP + diphosphate. Its function is as follows. Catalyzes the attachment of isoleucine to tRNA(Ile). As IleRS can inadvertently accommodate and process structurally similar amino acids such as valine, to avoid such errors it has two additional distinct tRNA(Ile)-dependent editing activities. One activity is designated as 'pretransfer' editing and involves the hydrolysis of activated Val-AMP. The other activity is designated 'posttransfer' editing and involves deacylation of mischarged Val-tRNA(Ile). This is Isoleucine--tRNA ligase from Rickettsia felis (strain ATCC VR-1525 / URRWXCal2) (Rickettsia azadi).